The sequence spans 932 residues: von Willebrand factor A domain-containing protein DDB_G0292028 (932 aa).

The disordered stretch occupies residues M1–N49. A compositionally biased stretch (basic and acidic residues) spans S15–I39. One can recognise a VIT domain in the interval L95 to S222. In terms of domain architecture, VWFA spans E342–I521. Disordered regions lie at residues Q661–Q752 and T800–S834. Residues T677–F686 are compositionally biased toward polar residues. The span at S815–S834 shows a compositional bias: low complexity.

The polypeptide is von Willebrand factor A domain-containing protein DDB_G0292028 (Dictyostelium discoideum (Social amoeba)).